The sequence spans 124 residues: Pal-related lipoprotein (124 aa).

An N-terminal signal peptide occupies residues 1–18 (MRYRAVFPMLIIVFALSG). Residue cysteine 19 is the site of N-palmitoyl cysteine attachment. A lipid anchor (S-diacylglycerol cysteine) is attached at cysteine 19.

Its subcellular location is the cell membrane. The sequence is that of Pal-related lipoprotein (slp) from Bacillus subtilis (strain 168).